We begin with the raw amino-acid sequence, 310 residues long: Protein TIFY 6A (310 aa).

Positions 141 to 176 constitute a Tify domain; sequence SKPLPPQLTIFYAGSVLVYQDIAPEKAQAIMLLAGN. The Jas motif lies at 259-284; sequence PQTRKASLARFLEKRKERVINVSPYY. Positions 261–268 match the Nuclear localization signal motif; sequence TRKASLAR.

Belongs to the TIFY/JAZ family. As to quaternary structure, homo- and heterodimer. Interacts with MYC2, AFPH2/NINJA, TIFY10A/JAZ1, TIFY6B/JAZ3, TIFY5A/JAZ8, TIFY9/JAZ10 and TIFY3A/JAZ11. Interacts with RHD6 and RSL1. In terms of processing, ubiquitinated. Targeted for degradation by the SCF(COI1) E3 ubiquitin ligase-proteasome pathway during jasmonate signaling.

The protein resides in the nucleus. In terms of biological role, repressor of jasmonate responses. Interacts with and suppresses RHD6 and RSL1 transcription factor activities to negatively regulate jasmonate-stimulated root hair development. The protein is Protein TIFY 6A (TIFY6A) of Arabidopsis thaliana (Mouse-ear cress).